A 316-amino-acid polypeptide reads, in one-letter code: RING finger protein 148 (316 aa).

An N-terminal signal peptide occupies residues methionine 1–glycine 12. Asparagine 56 carries N-linked (GlcNAc...) asparagine glycosylation. The PA domain maps to valine 84 to histidine 178. 2 helical membrane-spanning segments follow: residues glycine 173–glycine 193 and valine 204–tryptophan 224. An RING-type; atypical zinc finger spans residues cysteine 269–lysine 310.

It localises to the membrane. This chain is RING finger protein 148 (Rnf148), found in Mus musculus (Mouse).